Here is a 278-residue protein sequence, read N- to C-terminus: Large ribosomal subunit protein uL2 (278 aa).

The interval 201 to 278 is disordered; the sequence is HGNINDGKAG…IMRSRHQRKK (78 aa). Residues 210–221 are compositionally biased toward basic residues; sequence GRSRWRGKRPHV.

The protein belongs to the universal ribosomal protein uL2 family. In terms of assembly, part of the 50S ribosomal subunit. Forms a bridge to the 30S subunit in the 70S ribosome.

In terms of biological role, one of the primary rRNA binding proteins. Required for association of the 30S and 50S subunits to form the 70S ribosome, for tRNA binding and peptide bond formation. It has been suggested to have peptidyltransferase activity; this is somewhat controversial. Makes several contacts with the 16S rRNA in the 70S ribosome. This chain is Large ribosomal subunit protein uL2, found in Rhizobium meliloti (strain 1021) (Ensifer meliloti).